We begin with the raw amino-acid sequence, 703 residues long: Fibulin-1 (703 aa).

The first 29 residues, 1-29 (MERAAPSRRVPLPLLLLGGLALLAAGVDA), serve as a signal peptide directing secretion. 35 disulfide bridges follow: C36-C61, C37-C68, C50-C69, C78-C109, C91-C110, C112-C136, C113-C143, C126-C144, C180-C190, C186-C199, C201-C214, C220-C233, C227-C242, C248-C260, C266-C279, C273-C288, C294-C306, C312-C325, C319-C334, C341-C354, C360-C373, C367-C382, C384-C397, C403-C415, C411-C424, C426-C439, C445-C454, C450-C463, C465-C479, C485-C498, C494-C507, C509-C523, C529-C542, C536-C551, and C556-C577. 3 Anaphylatoxin-like domains span residues 36–76 (CCAD…LEEL), 77–111 (HCAT…RCCH), and 112–144 (CCLL…QACC). N-linked (GlcNAc...) (complex) asparagine glycosylation occurs at N98. The region spanning 176 to 215 (LNDRCRGGGPCKQQCRDTGDEVVCSCFVGYQLLSDGVSCE) is the EGF-like 1 domain. The region spanning 216-261 (DVNECITGSHSCRLGESCINTVGSFRCQRDSSCGTGYELTEDNSCK) is the EGF-like 2; calcium-binding domain. One can recognise an EGF-like 3; calcium-binding domain in the interval 262 to 307 (DIDECESGIHNCLPDFICQNTLGSFRCRPKLQCKSGFIQDALGNCI). The 48-residue stretch at 308-355 (DINECLSISAPCPIGHTCINTEGSYTCQKNVPNCGRGYHLNEEGTRCV) folds into the EGF-like 4; calcium-binding domain. The region spanning 356-398 (DVDECAPPAEPCGKGHRCVNSPGSFRCECKTGYYFDGISRMCV) is the EGF-like 5; calcium-binding domain. The segment at 356 to 440 (DVDECAPPAE…RLSVDGRSCE (85 aa)) is self-association and FN1-binding; calcium is necessary for homotypic binding, but not for heterotypic binding. Residues 399–440 (DVNECQRYPGRLCGHKCENTLGSYLCSCSVGFRLSVDGRSCE) enclose the EGF-like 6; calcium-binding domain. Residues 441–480 (DINECSSSPCSQECANVYGSYQCYCRRGYQLSDVDGVTCE) form the EGF-like 7; calcium-binding domain. An EGF-like 8; calcium-binding domain is found at 481–524 (DIDECALPTGGHICSYRCINIPGSFQCSCPSSGYRLAPNGRNCQ). In terms of domain architecture, EGF-like 9; calcium-binding spans 525-578 (DIDECVTGIHNCSINETCFNIQGGFRCLAFECPENYRRSAATLQQEKTDTVRCI). 2 N-linked (GlcNAc...) asparagine glycosylation sites follow: N535 and N539.

The protein belongs to the fibulin family. In terms of assembly, homomultimerizes and interacts with various extracellular matrix components such as FN1, LAMA1, LAMA2, NID, ACAN, CSPG2 and type IV collagen. Also interacts with APP and FGB. Interacts with FBLN7. Interacts with CCN3. (Microbial infection) Interacts with human papillomavirus/HPV type 16, 18 and 31 proteins E6. As to expression, isoform A and isoform B are only expressed in placenta. Isoform C and isoform D are expressed in a variety of tissues and cultured cells.

Its subcellular location is the secreted. The protein localises to the extracellular space. The protein resides in the extracellular matrix. Its function is as follows. Incorporated into fibronectin-containing matrix fibers. May play a role in cell adhesion and migration along protein fibers within the extracellular matrix (ECM). Could be important for certain developmental processes and contribute to the supramolecular organization of ECM architecture, in particular to those of basement membranes. Has been implicated in a role in cellular transformation and tumor invasion, it appears to be a tumor suppressor. May play a role in haemostasis and thrombosis owing to its ability to bind fibrinogen and incorporate into clots. Could play a significant role in modulating the neurotrophic activities of APP, particularly soluble APP. The protein is Fibulin-1 (FBLN1) of Homo sapiens (Human).